Here is a 28-residue protein sequence, read N- to C-terminus: Cycloviolin-B (28 aa).

Residues Gly-1–Asn-28 constitute a cross-link (cyclopeptide (Gly-Asn)). 3 cysteine pairs are disulfide-bonded: Cys-4/Cys-18, Cys-8/Cys-20, and Cys-13/Cys-25.

In terms of processing, this is a cyclic peptide.

Probably participates in a plant defense mechanism. Has anti-HIV activity. This Leonia cymosa (Sacha uba) protein is Cycloviolin-B.